Here is a 29-residue protein sequence, read N- to C-terminus: uncharacterized protein (29 aa).

The helical transmembrane segment at 7–27 threads the bilayer; the sequence is FSLVTTIIVLGLIVAVGLTAA.

Its subcellular location is the cell inner membrane. This is an uncharacterized protein from Escherichia coli O6:K15:H31 (strain 536 / UPEC).